A 342-amino-acid chain; its full sequence is Large ribosomal subunit protein uL3 (342 aa).

Positions Met-1 to Ala-22 are disordered.

Belongs to the universal ribosomal protein uL3 family. Part of the 50S ribosomal subunit. Forms a cluster with proteins L14 and L24e.

Its function is as follows. One of the primary rRNA binding proteins, it binds directly near the 3'-end of the 23S rRNA, where it nucleates assembly of the 50S subunit. The protein is Large ribosomal subunit protein uL3 of Sulfolobus acidocaldarius (strain ATCC 33909 / DSM 639 / JCM 8929 / NBRC 15157 / NCIMB 11770).